Here is a 138-residue protein sequence, read N- to C-terminus: Large ribosomal subunit protein uL16 (138 aa).

Over residues 1 to 17 (MLIPRKVKHRKQHHPRQ) the composition is skewed to basic residues. The disordered stretch occupies residues 1–22 (MLIPRKVKHRKQHHPRQRGIAS).

It belongs to the universal ribosomal protein uL16 family. Part of the 50S ribosomal subunit.

Binds 23S rRNA and is also seen to make contacts with the A and possibly P site tRNAs. This Mycobacterium leprae (strain Br4923) protein is Large ribosomal subunit protein uL16.